The following is a 226-amino-acid chain: ATP synthase subunit a (226 aa).

Helical transmembrane passes span 17-37, 79-99, 105-125, 168-188, and 200-222; these read FNYLFHLILVAIIVLIVAKLA, LVATIGLIVLTSNVIGIIPGF, SLNLTLCLALSVFLYYNFEGI, FGNIKGDDLFLMVVLSLAPWV, and MALLQTFIFMILTYVYLAGAVVV.

Belongs to the ATPase A chain family. In terms of assembly, F-type ATPases have 2 components, CF(1) - the catalytic core - and CF(0) - the membrane proton channel. CF(1) has five subunits: alpha(3), beta(3), gamma(1), delta(1), epsilon(1). CF(0) has three main subunits: a(1), b(2) and c(9-12). The alpha and beta chains form an alternating ring which encloses part of the gamma chain. CF(1) is attached to CF(0) by a central stalk formed by the gamma and epsilon chains, while a peripheral stalk is formed by the delta and b chains.

The protein localises to the cell inner membrane. Its function is as follows. Key component of the proton channel; it plays a direct role in the translocation of protons across the membrane. In Campylobacter fetus subsp. fetus (strain 82-40), this protein is ATP synthase subunit a.